A 207-amino-acid chain; its full sequence is Small ribosomal subunit protein uS4c (207 aa).

Residues 92-155 (MRLDNILFRL…TYQSILSKRI (64 aa)) form the S4 RNA-binding domain.

It belongs to the universal ribosomal protein uS4 family. As to quaternary structure, part of the 30S ribosomal subunit. Contacts protein S5. The interaction surface between S4 and S5 is involved in control of translational fidelity.

The protein resides in the plastid. It localises to the chloroplast. One of the primary rRNA binding proteins, it binds directly to 16S rRNA where it nucleates assembly of the body of the 30S subunit. In terms of biological role, with S5 and S12 plays an important role in translational accuracy. This Equisetum giganteum (Giant horsetail) protein is Small ribosomal subunit protein uS4c (rps4).